We begin with the raw amino-acid sequence, 446 residues long: MADQDLYSGSSETTEGRVFTVTGQDWDSIAEGLAEDEAQERIVVNMGPQHPSTHGVLRLILELEGETVTEARAGIGYLHTGIEKNMEYRTWTQGVTFCTRMDYLSPFFNEMTYVLGIERLLDIEDRVPEKAQVMRVLLMELNRISSHLVAIATGGMELGALTVMTIGFRERELVLDLFELITGLRMNHAFIRPGGVAQDMPPGALDEIRGFVALMKKRLPEYADLCNANPIFKGRLEGIGHLDLAGCLALGLTGPVLRSTGYPWDLRKTQPYCGYETYDFDVQTWDTSDSYGRFRIRLNEMWESLRIIEQAADRLAGLDGAPVMIEDKKIGWPSQLAIGSDGMGNSLDHIRHIMGESMEALIHHFKLVTEGFRVPPGQAYVPVESPRGELGAHVVSDGGTRPFRAHFRDPSFTNLQATSVMAEGGMVADVIVAIASIDPVMGGVDR.

The protein belongs to the complex I 49 kDa subunit family. In terms of assembly, NDH-1 is composed of 14 different subunits. Subunits NuoB, C, D, E, F, and G constitute the peripheral sector of the complex.

The protein localises to the cell membrane. The enzyme catalyses a quinone + NADH + 5 H(+)(in) = a quinol + NAD(+) + 4 H(+)(out). Its function is as follows. NDH-1 shuttles electrons from NADH, via FMN and iron-sulfur (Fe-S) centers, to quinones in the respiratory chain. The immediate electron acceptor for the enzyme in this species is believed to be a menaquinone. Couples the redox reaction to proton translocation (for every two electrons transferred, four hydrogen ions are translocated across the cytoplasmic membrane), and thus conserves the redox energy in a proton gradient. The chain is NADH-quinone oxidoreductase subunit D from Nocardioides sp. (strain ATCC BAA-499 / JS614).